A 139-amino-acid chain; its full sequence is Putative nickel-responsive regulator (139 aa).

Ni(2+) contacts are provided by histidine 79, histidine 90, histidine 92, and cysteine 98.

Belongs to the transcriptional regulatory CopG/NikR family. The cofactor is Ni(2+).

Transcriptional regulator. The sequence is that of Putative nickel-responsive regulator from Anaeromyxobacter sp. (strain K).